Reading from the N-terminus, the 202-residue chain is Putative 3-methyladenine DNA glycosylase (202 aa).

Belongs to the DNA glycosylase MPG family.

This is Putative 3-methyladenine DNA glycosylase from Rhodopseudomonas palustris (strain BisB5).